A 216-amino-acid chain; its full sequence is Uracil phosphoribosyltransferase (216 aa).

Residues Arg-85, Arg-110, and Asp-135–Ser-143 each bind 5-phospho-alpha-D-ribose 1-diphosphate. Uracil contacts are provided by residues Ile-200 and Gly-205–Ala-207. Asp-206 is a binding site for 5-phospho-alpha-D-ribose 1-diphosphate.

Belongs to the UPRTase family. The cofactor is Mg(2+).

It catalyses the reaction UMP + diphosphate = 5-phospho-alpha-D-ribose 1-diphosphate + uracil. The protein operates within pyrimidine metabolism; UMP biosynthesis via salvage pathway; UMP from uracil: step 1/1. With respect to regulation, allosterically activated by GTP. Its function is as follows. Catalyzes the conversion of uracil and 5-phospho-alpha-D-ribose 1-diphosphate (PRPP) to UMP and diphosphate. This chain is Uracil phosphoribosyltransferase, found in Ralstonia pickettii (strain 12J).